A 183-amino-acid chain; its full sequence is Caspase recruitment domain-containing protein 19 (183 aa).

An intrachain disulfide couples C7 to C77. Positions 8–99 (DRLVQDTPFL…PLHSHLPSRY (92 aa)) constitute a CARD domain. A helical transmembrane segment spans residues 122 to 142 (GPMSFLAGLGLAAGLALLLYC).

Associates with BCL10 by CARD-CARD interaction.

The protein localises to the endoplasmic reticulum membrane. It localises to the mitochondrion membrane. Functionally, plays a role in inhibiting the effects of BCL10-induced activation of NF-kappa-B. This is Caspase recruitment domain-containing protein 19 from Mus musculus (Mouse).